Here is a 92-residue protein sequence, read N- to C-terminus: C-C motif chemokine 4 (92 aa).

The signal sequence occupies residues 1-23 (MKLCVTVLSLLVLVAAFCSPALS). 2 disulfides stabilise this stretch: Cys-34-Cys-58 and Cys-35-Cys-74.

This sequence belongs to the intercrine beta (chemokine CC) family. As to quaternary structure, homodimer. Interacts with CCR5.

The protein localises to the secreted. Its function is as follows. Monokine with inflammatory and chemokinetic properties. The polypeptide is C-C motif chemokine 4 (CCL4) (Sus scrofa (Pig)).